The following is a 342-amino-acid chain: tRNA dimethylallyltransferase (342 aa).

A compositionally biased stretch (polar residues) spans 1 to 13; the sequence is MNDTTAKTLNCSP. The disordered stretch occupies residues 1-21; that stretch reads MNDTTAKTLNCSPASRDGFPE. An ATP-binding site is contributed by 40 to 47; that stretch reads GPTGVGKT. 42-47 contributes to the substrate binding site; the sequence is TGVGKT. Interaction with substrate tRNA stretches follow at residues 65-68 and 189-193; these read DSMQ and QRILR.

This sequence belongs to the IPP transferase family. As to quaternary structure, monomer. Requires Mg(2+) as cofactor.

It carries out the reaction adenosine(37) in tRNA + dimethylallyl diphosphate = N(6)-dimethylallyladenosine(37) in tRNA + diphosphate. Catalyzes the transfer of a dimethylallyl group onto the adenine at position 37 in tRNAs that read codons beginning with uridine, leading to the formation of N6-(dimethylallyl)adenosine (i(6)A). In Syntrophobacter fumaroxidans (strain DSM 10017 / MPOB), this protein is tRNA dimethylallyltransferase.